The primary structure comprises 128 residues: Aspartate 1-decarboxylase (128 aa).

Catalysis depends on S25, which acts as the Schiff-base intermediate with substrate; via pyruvic acid. At S25 the chain carries Pyruvic acid (Ser). T57 contacts substrate. The active-site Proton donor is the Y58. 73-75 (GAA) is a substrate binding site.

The protein belongs to the PanD family. In terms of assembly, heterooctamer of four alpha and four beta subunits. It depends on pyruvate as a cofactor. Post-translationally, is synthesized initially as an inactive proenzyme, which is activated by self-cleavage at a specific serine bond to produce a beta-subunit with a hydroxyl group at its C-terminus and an alpha-subunit with a pyruvoyl group at its N-terminus.

The protein localises to the cytoplasm. It carries out the reaction L-aspartate + H(+) = beta-alanine + CO2. Its pathway is cofactor biosynthesis; (R)-pantothenate biosynthesis; beta-alanine from L-aspartate: step 1/1. Its function is as follows. Catalyzes the pyruvoyl-dependent decarboxylation of aspartate to produce beta-alanine. This Chlorobium limicola (strain DSM 245 / NBRC 103803 / 6330) protein is Aspartate 1-decarboxylase.